We begin with the raw amino-acid sequence, 204 residues long: Large ribosomal subunit protein eL15z (204 aa).

It belongs to the eukaryotic ribosomal protein eL15 family.

This chain is Large ribosomal subunit protein eL15z (SB61), found in Picea mariana (Black spruce).